A 195-amino-acid chain; its full sequence is Cysteine/O-acetylserine efflux protein (195 aa).

Topologically, residues 1-7 are periplasmic; it reads MTPTLLS. The chain crosses the membrane as a helical span at residues 8–28; it reads AFWTYTLITAMTPGPNNILAL. At 29-46 the chain is on the cytoplasmic side; that stretch reads SSATTHGFHQSTRVLAGM. A helical transmembrane segment spans residues 47-67; the sequence is SLGFLIVMLLCAGISFSLAVI. Residues 68 to 69 are Periplasmic-facing; that stretch reads DP. Residues 70-90 form a helical membrane-spanning segment; it reads AAVHLLSWAGAAYIVWLAWKI. The Cytoplasmic segment spans residues 91–104; sequence ATSPTKEDGLQTKP. The chain crosses the membrane as a helical span at residues 105–125; it reads ISFWASFALQFVNVKIILYGV. At 126–141 the chain is on the periplasmic side; sequence TALSTFVLPQTQALSW. A helical membrane pass occupies residues 142–162; that stretch reads IVGVSVLLAMIGTFGNVCWAL. The Cytoplasmic portion of the chain corresponds to 163–176; that stretch reads AGHLFQRLFRQYGR. The helical transmembrane segment at 177–194 threads the bilayer; it reads QLNIVLALLLIYCAVRIF. Position 195 (Tyr-195) is a topological domain, periplasmic.

It belongs to the Rht family.

It is found in the cell inner membrane. The enzyme catalyses O-acetyl-L-serine(in) = O-acetyl-L-serine(out). It carries out the reaction L-cysteine(in) = L-cysteine(out). In terms of biological role, exporter of O-acetylserine (OAS) and cysteine. This chain is Cysteine/O-acetylserine efflux protein (eamB), found in Escherichia coli O157:H7.